Consider the following 114-residue polypeptide: uncharacterized protein (114 aa).

Residues T18–K29 are compositionally biased toward basic residues. Disordered regions lie at residues T18–G47 and S65–N108. A compositionally biased stretch (basic and acidic residues) spans R30–R41.

This is an uncharacterized protein from Homo sapiens (Human).